The primary structure comprises 115 residues: Phosphoribosyl-AMP cyclohydrolase (115 aa).

D80 provides a ligand contact to Mg(2+). C81 provides a ligand contact to Zn(2+). The Mg(2+) site is built by D82 and D84. Residues C97 and C104 each coordinate Zn(2+).

It belongs to the PRA-CH family. As to quaternary structure, homodimer. Mg(2+) serves as cofactor. Zn(2+) is required as a cofactor.

The protein resides in the cytoplasm. The catalysed reaction is 1-(5-phospho-beta-D-ribosyl)-5'-AMP + H2O = 1-(5-phospho-beta-D-ribosyl)-5-[(5-phospho-beta-D-ribosylamino)methylideneamino]imidazole-4-carboxamide. Its pathway is amino-acid biosynthesis; L-histidine biosynthesis; L-histidine from 5-phospho-alpha-D-ribose 1-diphosphate: step 3/9. Catalyzes the hydrolysis of the adenine ring of phosphoribosyl-AMP. This is Phosphoribosyl-AMP cyclohydrolase from Mycolicibacterium paratuberculosis (strain ATCC BAA-968 / K-10) (Mycobacterium paratuberculosis).